Consider the following 325-residue polypeptide: Malate dehydrogenase (325 aa).

9 to 15 (GAAGAIG) is a binding site for NAD(+). Residues R90 and R96 each contribute to the substrate site. NAD(+)-binding positions include N103, Q110, and 127–129 (VGN). Residues N129 and R160 each coordinate substrate. H185 functions as the Proton acceptor in the catalytic mechanism.

The protein belongs to the LDH/MDH superfamily. MDH type 2 family.

The enzyme catalyses (S)-malate + NAD(+) = oxaloacetate + NADH + H(+). Catalyzes the reversible oxidation of malate to oxaloacetate. The chain is Malate dehydrogenase from Rubrobacter xylanophilus (strain DSM 9941 / JCM 11954 / NBRC 16129 / PRD-1).